We begin with the raw amino-acid sequence, 242 residues long: Probable septum site-determining protein MinC (242 aa).

Positions 120 to 135 (APKKVEEKPAEPEHKP) are enriched in basic and acidic residues. The interval 120–144 (APKKVEEKPAEPEHKPSRIVTSPVR) is disordered.

The protein belongs to the MinC family. Interacts with MinD and FtsZ.

Functionally, cell division inhibitor that blocks the formation of polar Z ring septums. Rapidly oscillates between the poles of the cell to destabilize FtsZ filaments that have formed before they mature into polar Z rings. Prevents FtsZ polymerization. The sequence is that of Probable septum site-determining protein MinC from Ectopseudomonas mendocina (strain ymp) (Pseudomonas mendocina).